The following is a 140-amino-acid chain: FAD synthase (140 aa).

ATP is bound by residues 9 to 10 (TF), 14 to 17 (HPGH), Asn92, and Tyr119.

It belongs to the archaeal FAD synthase family. Homodimer. Requires a divalent metal cation as cofactor.

It carries out the reaction FMN + ATP + H(+) = FAD + diphosphate. It participates in cofactor biosynthesis; FAD biosynthesis; FAD from FMN: step 1/1. Its function is as follows. Catalyzes the transfer of the AMP portion of ATP to flavin mononucleotide (FMN) to produce flavin adenine dinucleotide (FAD) coenzyme. The chain is FAD synthase from Methanocorpusculum labreanum (strain ATCC 43576 / DSM 4855 / Z).